The following is a 43-amino-acid chain: Defensin, isoforms B and C (43 aa).

3 cysteine pairs are disulfide-bonded: Cys3/Cys34, Cys20/Cys40, and Cys24/Cys42.

It belongs to the invertebrate defensin family. Type 1 subfamily.

Its subcellular location is the secreted. In terms of biological role, involved in anti Gram-positive activity of immune hemolymph of Z.atratus. The polypeptide is Defensin, isoforms B and C (Zophobas atratus (Giant mealworm beetle)).